A 156-amino-acid polypeptide reads, in one-letter code: 16 kDa phloem protein 1 (156 aa).

One can recognise a C2 domain in the interval 1–108 (MAVGILEVSL…LEMGVEKGTA (108 aa)). Residues D20, D26, D78, D80, S83, and D86 each contribute to the Ca(2+) site.

The cofactor is Ca(2+).

Binds to both sense and antisense RNA. Can also bind sheared DNA and dodecamer DNA with a low affinity. Interacts with mesophyll plasmodesmata to mediate its own cell-to-cell transport and potentiate RNA trafficking. May play a role in plant defense signaling. This is 16 kDa phloem protein 1 from Arabidopsis thaliana (Mouse-ear cress).